Consider the following 121-residue polypeptide: Large ribosomal subunit protein uL18 (121 aa).

The disordered stretch occupies residues 1–25; the sequence is MKIVISKPDKNKIRQKRHRRVRGKL. Residues 13-23 show a composition bias toward basic residues; that stretch reads IRQKRHRRVRG.

This sequence belongs to the universal ribosomal protein uL18 family. In terms of assembly, part of the 50S ribosomal subunit; part of the 5S rRNA/L5/L18/L25 subcomplex. Contacts the 5S and 23S rRNAs.

This is one of the proteins that bind and probably mediate the attachment of the 5S RNA into the large ribosomal subunit, where it forms part of the central protuberance. The chain is Large ribosomal subunit protein uL18 from Streptococcus pyogenes serotype M28 (strain MGAS6180).